Consider the following 150-residue polypeptide: MRGEANGEEEQQPPRRNHLRDDAEEEEEVERRAARPVSGQQQQQQRRRPTDVGGGAAMRSVGYVGKHRLSAAIARLDQELQSLQDELNELETMEPASAACQGVITSTEGKSDPLLPVTIGPENASWERWFQRVRSSRSNKWWASKGSDFS.

Positions 1 to 11 (MRGEANGEEEQ) are enriched in acidic residues. Positions 1–59 (MRGEANGEEEQQPPRRNHLRDDAEEEEEVERRAARPVSGQQQQQQRRRPTDVGGGAAMR) are disordered. Residues 65 to 97 (GKHRLSAAIARLDQELQSLQDELNELETMEPAS) are a coiled coil. The G protein gamma domain maps to 71–137 (AAIARLDQEL…RWFQRVRSSR (67 aa)).

G proteins are composed of 3 units, alpha, beta and gamma. Interacts with the beta subunit RGB1.

Its subcellular location is the cell membrane. In terms of biological role, guanine nucleotide-binding proteins (G proteins) are involved as modulators or transducers in various transmembrane signaling systems. This is Guanine nucleotide-binding protein subunit gamma 2 from Oryza sativa subsp. indica (Rice).